We begin with the raw amino-acid sequence, 342 residues long: Dihydroorotase (342 aa).

His13 and His15 together coordinate Zn(2+). Residues 15–17 (HLR) and Asn41 contribute to the substrate site. Zn(2+)-binding residues include Lys98, His135, and His173. Residue Lys98 is modified to N6-carboxylysine. A substrate-binding site is contributed by His135. Leu218 is a substrate binding site. Asp246 is a binding site for Zn(2+). Residue Asp246 is part of the active site. Substrate contacts are provided by His250 and Ala262.

This sequence belongs to the metallo-dependent hydrolases superfamily. DHOase family. Class II DHOase subfamily. As to quaternary structure, homodimer. Requires Zn(2+) as cofactor.

It carries out the reaction (S)-dihydroorotate + H2O = N-carbamoyl-L-aspartate + H(+). The protein operates within pyrimidine metabolism; UMP biosynthesis via de novo pathway; (S)-dihydroorotate from bicarbonate: step 3/3. Its function is as follows. Catalyzes the reversible cyclization of carbamoyl aspartate to dihydroorotate. In Photobacterium profundum (strain SS9), this protein is Dihydroorotase.